Here is a 285-residue protein sequence, read N- to C-terminus: Putative phosphatase MG125 (285 aa).

Asp-8 acts as the Nucleophile in catalysis. A Mg(2+)-binding site is contributed by Asp-8. Residue Leu-9 coordinates phosphate. Asp-10 is a binding site for Mg(2+). Residues 44 to 45 and Lys-205 each bind phosphate; that span reads TG. Mg(2+) contacts are provided by Asp-228 and Ser-229. Asn-231 contacts phosphate.

Belongs to the HAD-like hydrolase superfamily. Cof family. Requires Mg(2+) as cofactor.

In Mycoplasma genitalium (strain ATCC 33530 / DSM 19775 / NCTC 10195 / G37) (Mycoplasmoides genitalium), this protein is Putative phosphatase MG125.